We begin with the raw amino-acid sequence, 149 residues long: Transcriptional repressor NrdR (149 aa).

A zinc finger spans residues 3–34 (CPFCGHLETQVVETRISEDAEFIRRRRQCGAC). In terms of domain architecture, ATP-cone spans 49 to 139 (PSIVKKDGRR…VYRSFEDIDE (91 aa)).

The protein belongs to the NrdR family. Requires Zn(2+) as cofactor.

Negatively regulates transcription of bacterial ribonucleotide reductase nrd genes and operons by binding to NrdR-boxes. This Polaromonas naphthalenivorans (strain CJ2) protein is Transcriptional repressor NrdR.